The primary structure comprises 538 residues: Probable folate-biopterin transporter 9, chloroplastic (538 aa).

The transit peptide at 1 to 57 (MNNPLLSISNPVKFFKPPIPYRISLNTTINKKQKHQSKTLVVKSNKRSTTSLTSSVS) directs the protein to the chloroplast. 12 helical membrane-spanning segments follow: residues 85–105 (VLLC…WLAL), 129–149 (LPMV…IGGA), 152–172 (VPYI…LAIF), 178–198 (VLPS…ITEV), 220–240 (ALMA…YCLL), 246–266 (ILFL…LSSK), 309–329 (LIWI…VFCY), 339–359 (SVIG…TVVY), 370–390 (ALIH…YILV), 395–415 (LAFG…AEIL), 447–467 (LCLS…MIGI), and 479–499 (ILIQ…VPML).

This sequence belongs to the major facilitator superfamily. Folate-biopterin transporter (TC 2.A.71) family.

Its subcellular location is the plastid. The protein localises to the chloroplast membrane. Its function is as follows. Could mediate folate transport. The protein is Probable folate-biopterin transporter 9, chloroplastic of Arabidopsis thaliana (Mouse-ear cress).